We begin with the raw amino-acid sequence, 1026 residues long: Multidrug resistance protein MdtC (1026 aa).

Residues 1–6 (MRFFAL) are Cytoplasmic-facing. Residues 7 to 29 (FIYRPVATILIAAAITLCGILGF) traverse the membrane as a helical segment. Residues 30 to 335 (RLLPVAPLPQ…TIRASLQEVE (306 aa)) lie on the Periplasmic side of the membrane. The chain crosses the membrane as a helical span at residues 336–353 (ETLAISVALVILVVFLFL). At 354–359 (RSGRAT) the chain is on the cytoplasmic side. Residues 360–379 (LIPAVAVPVSLIGTFAAMYL) form a helical membrane-spanning segment. The Periplasmic segment spans residues 380–388 (CGFSLNNLS). The helical transmembrane segment at 389–411 (LMALTIATGFVVDDAIVVLENIA) threads the bilayer. The Cytoplasmic portion of the chain corresponds to 412-430 (RHLEARMKPLQAALQGTRE). The helical transmembrane segment at 431–453 (VGFTVISMSLSLVAVFLPLLLMG) threads the bilayer. Residues 454-467 (GLPGRLLREFAVTL) lie on the Periplasmic side of the membrane. A helical membrane pass occupies residues 468–490 (SVAIGISLVVSLTLTPMMCGWML). The Cytoplasmic segment spans residues 491–852 (KSSKPRTQPR…QVFQQTMNSQ (362 aa)). A helical membrane pass occupies residues 853–875 (LILIVAAIATVYIVLGILYESYV). Residues 876 to 894 (HPLTILSTLPSAGVGALLA) are Periplasmic-facing. Residues 895-917 (LELFNAPFSLIALIGIMLLIGIV) form a helical membrane-spanning segment. Residues 918–947 (KKNAIMMVDFALEAQRSGGLTPEQAIFQAC) lie on the Cytoplasmic side of the membrane. The helical transmembrane segment at 948 to 970 (LLRFRPIMMTTLAALFGALPLVL) threads the bilayer. The Periplasmic portion of the chain corresponds to 971–984 (SGGDGSELRQPLGI). The chain crosses the membrane as a helical span at residues 985-1007 (TIVGGLVMSQLLTLYTTPVVYLF). Over 1008 to 1026 (FDRLRLRFSRKNSKPVVEI) the chain is Cytoplasmic.

This sequence belongs to the resistance-nodulation-cell division (RND) (TC 2.A.6) family. MdtC subfamily. Part of a tripartite efflux system composed of MdtA, MdtB and MdtC. MdtC forms a heteromultimer with MdtB.

The protein localises to the cell inner membrane. In Salmonella typhi, this protein is Multidrug resistance protein MdtC.